The primary structure comprises 286 residues: ATP synthase gamma chain (286 aa).

It belongs to the ATPase gamma chain family. In terms of assembly, F-type ATPases have 2 components, CF(1) - the catalytic core - and CF(0) - the membrane proton channel. CF(1) has five subunits: alpha(3), beta(3), gamma(1), delta(1), epsilon(1). CF(0) has three main subunits: a, b and c.

The protein resides in the cell inner membrane. Its function is as follows. Produces ATP from ADP in the presence of a proton gradient across the membrane. The gamma chain is believed to be important in regulating ATPase activity and the flow of protons through the CF(0) complex. In Christiangramia forsetii (strain DSM 17595 / CGMCC 1.15422 / KT0803) (Gramella forsetii), this protein is ATP synthase gamma chain.